The chain runs to 504 residues: D-alanine--D-alanyl carrier protein ligase (504 aa).

152-153 (TS) provides a ligand contact to ATP. Asp197 provides a ligand contact to D-alanine. Residue 292 to 297 (NTYGPT) participates in ATP binding. D-alanine is bound at residue Val301. Residues Asp383, 394 to 397 (YNGR), and Lys492 contribute to the ATP site. D-alanine is bound at residue Lys492.

It belongs to the ATP-dependent AMP-binding enzyme family. DltA subfamily.

The protein resides in the cytoplasm. It catalyses the reaction holo-[D-alanyl-carrier protein] + D-alanine + ATP = D-alanyl-[D-alanyl-carrier protein] + AMP + diphosphate. It functions in the pathway cell wall biogenesis; lipoteichoic acid biosynthesis. Functionally, catalyzes the first step in the D-alanylation of lipoteichoic acid (LTA), the activation of D-alanine and its transfer onto the D-alanyl carrier protein (Dcp) DltC. In an ATP-dependent two-step reaction, forms a high energy D-alanyl-AMP intermediate, followed by transfer of the D-alanyl residue as a thiol ester to the phosphopantheinyl prosthetic group of the Dcp. D-alanylation of LTA plays an important role in modulating the properties of the cell wall in Gram-positive bacteria, influencing the net charge of the cell wall. This Bacillus cytotoxicus (strain DSM 22905 / CIP 110041 / 391-98 / NVH 391-98) protein is D-alanine--D-alanyl carrier protein ligase.